A 615-amino-acid chain; its full sequence is RNA polymerase sigma factor RpoD (615 aa).

The disordered stretch occupies residues 177–215 (APTATHVGSELSQEDLDDDEDEDEEDGDDDAADDDNSID). Residues 188–214 (SQEDLDDDEDEDEEDGDDDAADDDNSI) show a composition bias toward acidic residues. The sigma-70 factor domain-2 stretch occupies residues 381–451 (MVEANLRLVI…TRSIADQART (71 aa)). The Interaction with polymerase core subunit RpoC signature appears at 405–408 (DLIQ). The segment at 460-536 (ETINKLNRIS…DTTLELPLDS (77 aa)) is sigma-70 factor domain-3. A sigma-70 factor domain-4 region spans residues 549–602 (VLAGLTAREAKVLRMRFGIDMNTDHTLEEVGKQFDVTRERIRQIEAKALRKLRH). Residues 575 to 594 (LEEVGKQFDVTRERIRQIEA) constitute a DNA-binding region (H-T-H motif).

The protein belongs to the sigma-70 factor family. RpoD/SigA subfamily. In terms of assembly, interacts transiently with the RNA polymerase catalytic core.

The protein resides in the cytoplasm. In terms of biological role, sigma factors are initiation factors that promote the attachment of RNA polymerase to specific initiation sites and are then released. This sigma factor is the primary sigma factor during exponential growth. This Salmonella typhi protein is RNA polymerase sigma factor RpoD.